The chain runs to 443 residues: MAAQADDELNKLRLNGQNGEAKEQVSASAVDTADNDDSEDDEKEEEGGAEVAATEAAKKKKKRKPKKKKKGGAKKQSSPPRVPVSELFPNNQYPEGEIVEYKDENNYRTTNEEKRYLDRMNNDFLQEYRQGAEVHRQVRQYAQKNIKPGQTLTEIAEGIEDAVRALTGHQGLEEGDNIKGGMGFPCGLSINHCAAHYTPNAGNKMVLQQGDVMKVDFGAHINGRIVDSAFTMTFDPVYDNLLTAVKEATNTGIREAGIDVRMSDIGAAIQEVMESYEVEINGTTYPVKAIRNLNGHNIDQHVIHGGKSVPIVKGGDQTKMEEGEVFAIETFGSTGKGYVREDMETSHYAKAQDAPNVSLRLSSAKNLLNVINKNFGTLPFCRRYLDRLGQDKYLLGLNNLVSAGIVQDYPPLCDIKGSYTAQYEHTIVLRPTVKEVISRGDDY.

The tract at residues 1-90 is disordered; sequence MAAQADDELN…RVPVSELFPN (90 aa). Acidic residues predominate over residues 33-48; that stretch reads ADNDDSEDDEKEEEGG. Basic residues predominate over residues 58 to 73; it reads KKKKKRKPKKKKKGGA. A substrate-binding site is contributed by H196. Residues D216, D227, and H296 each contribute to the a divalent metal cation site. H304 contributes to the substrate binding site. A divalent metal cation-binding residues include E329 and E424.

This sequence belongs to the peptidase M24A family. Methionine aminopeptidase eukaryotic type 2 subfamily. Co(2+) is required as a cofactor. Requires Zn(2+) as cofactor. Mn(2+) serves as cofactor. The cofactor is Fe(2+).

Its subcellular location is the cytoplasm. It catalyses the reaction Release of N-terminal amino acids, preferentially methionine, from peptides and arylamides.. Functionally, cotranslationally removes the N-terminal methionine from nascent proteins. The N-terminal methionine is often cleaved when the second residue in the primary sequence is small and uncharged (Met-Ala-, Cys, Gly, Pro, Ser, Thr, or Val). This chain is Methionine aminopeptidase 2-1, found in Talaromyces stipitatus (strain ATCC 10500 / CBS 375.48 / QM 6759 / NRRL 1006) (Penicillium stipitatum).